We begin with the raw amino-acid sequence, 225 residues long: Ribose-5-phosphate isomerase A (225 aa).

Residues 33 to 36 (TGST), 86 to 89 (DGAD), and 99 to 102 (KGGG) each bind substrate. Glutamate 108 acts as the Proton acceptor in catalysis. Substrate is bound at residue lysine 126.

The protein belongs to the ribose 5-phosphate isomerase family. As to quaternary structure, homodimer.

It catalyses the reaction aldehydo-D-ribose 5-phosphate = D-ribulose 5-phosphate. It participates in carbohydrate degradation; pentose phosphate pathway; D-ribose 5-phosphate from D-ribulose 5-phosphate (non-oxidative stage): step 1/1. Functionally, catalyzes the reversible conversion of ribose-5-phosphate to ribulose 5-phosphate. This is Ribose-5-phosphate isomerase A from Bordetella petrii (strain ATCC BAA-461 / DSM 12804 / CCUG 43448).